A 127-amino-acid chain; its full sequence is MTITMLKSKIHRATVTEANLNYVGSITIDKALMDKSNILEYEKVQIVDIDNGNRFETYVIAGEENSGVICLNGAAARMVQKGDKIIIMSYCSLTIDEANKFNPTVLFVDNKNNIEKLTNYEKHGEII.

Residue S25 is the Schiff-base intermediate with substrate; via pyruvic acid of the active site. S25 bears the Pyruvic acid (Ser) mark. T57 provides a ligand contact to substrate. Catalysis depends on Y58, which acts as the Proton donor. 73–75 (GAA) contributes to the substrate binding site.

The protein belongs to the PanD family. In terms of assembly, heterooctamer of four alpha and four beta subunits. It depends on pyruvate as a cofactor. In terms of processing, is synthesized initially as an inactive proenzyme, which is activated by self-cleavage at a specific serine bond to produce a beta-subunit with a hydroxyl group at its C-terminus and an alpha-subunit with a pyruvoyl group at its N-terminus.

Its subcellular location is the cytoplasm. It carries out the reaction L-aspartate + H(+) = beta-alanine + CO2. Its pathway is cofactor biosynthesis; (R)-pantothenate biosynthesis; beta-alanine from L-aspartate: step 1/1. In terms of biological role, catalyzes the pyruvoyl-dependent decarboxylation of aspartate to produce beta-alanine. The polypeptide is Aspartate 1-decarboxylase (Clostridium botulinum (strain Loch Maree / Type A3)).